Reading from the N-terminus, the 100-residue chain is NADH-quinone oxidoreductase subunit K (100 aa).

Helical transmembrane passes span 2-22, 29-49, and 63-83; these read VPTT…MIGV, IMVF…LVAF, and FIVM…IVAI.

This sequence belongs to the complex I subunit 4L family. NDH-1 is composed of 15 different subunits. Subunits NuoA, H, J, K, L, M, N constitute the membrane sector of the complex.

Its subcellular location is the cell membrane. It catalyses the reaction a quinone + NADH + 5 H(+)(in) = a quinol + NAD(+) + 4 H(+)(out). NDH-1 shuttles electrons from NADH, via FMN and iron-sulfur (Fe-S) centers, to quinones in the respiratory chain. The immediate electron acceptor for the enzyme in this species is believed to be a menaquinone. Couples the redox reaction to proton translocation (for every two electrons transferred, four hydrogen ions are translocated across the cytoplasmic membrane), and thus conserves the redox energy in a proton gradient. This chain is NADH-quinone oxidoreductase subunit K, found in Deinococcus deserti (strain DSM 17065 / CIP 109153 / LMG 22923 / VCD115).